The following is a 512-amino-acid chain: Dihydroniloticin synthase CYP71CD2 (512 aa).

The chain crosses the membrane as a helical span at residues 1–21; sequence MNLQLDYFSITSFLVFLVVLF. Cysteine 449 provides a ligand contact to heme.

This sequence belongs to the cytochrome P450 family. Heme is required as a cofactor.

Its subcellular location is the membrane. It catalyses the reaction tirucalla-7,24-dien-3beta-ol + 2 reduced [NADPH--hemoprotein reductase] + 2 O2 = dihydroniloticin + 2 oxidized [NADPH--hemoprotein reductase] + 2 H2O + 2 H(+). It functions in the pathway secondary metabolite biosynthesis; terpenoid biosynthesis. Functionally, monooxygenase involved in the biosynthesis of limonoids triterpene natural products such as azadirachtin, an antifeedant widely used as bioinsecticide, and possessing many medicinal applications including anti-tumoral, anti-malarial, anti-rheumatic, antibacterial, anti-inflammatory, anti-pyretic and diuretic effects. Catalyzes the conversion of tirucalladienol to dihydroniloticin. This chain is Dihydroniloticin synthase CYP71CD2, found in Azadirachta indica (Neem tree).